A 268-amino-acid polypeptide reads, in one-letter code: Cytochrome c oxidase subunit 3 (268 aa).

7 helical membrane-spanning segments follow: residues 23-43 (ILVSFSVMSIMLTLVFNMHGF), 49-69 (WVVFSAIVAIMTMALWFRDII), 88-108 (IGFILFVVSELFFFIAIFWAF), 141-161 (TILLLCSGATLTWSHHALLGG), 166-186 (TLLGLILTIALAVTFMICQYM), 203-223 (VFYFGTGFHGLHIIIGIIMLG), and 246-266 (ILYYHFVDVVWLFLYIVFYWW).

The protein belongs to the cytochrome c oxidase subunit 3 family. In terms of assembly, component of the cytochrome c oxidase (complex IV, CIV), a multisubunit enzyme composed of a catalytic core of 3 subunits and several supernumerary subunits. The complex exists as a monomer or a dimer and forms supercomplexes (SCs) in the inner mitochondrial membrane with ubiquinol-cytochrome c oxidoreductase (cytochrome b-c1 complex, complex III, CIII).

It localises to the mitochondrion inner membrane. The catalysed reaction is 4 Fe(II)-[cytochrome c] + O2 + 8 H(+)(in) = 4 Fe(III)-[cytochrome c] + 2 H2O + 4 H(+)(out). In terms of biological role, component of the cytochrome c oxidase, the last enzyme in the mitochondrial electron transport chain which drives oxidative phosphorylation. The respiratory chain contains 3 multisubunit complexes succinate dehydrogenase (complex II, CII), ubiquinol-cytochrome c oxidoreductase (cytochrome b-c1 complex, complex III, CIII) and cytochrome c oxidase (complex IV, CIV), that cooperate to transfer electrons derived from NADH and succinate to molecular oxygen, creating an electrochemical gradient over the inner membrane that drives transmembrane transport and the ATP synthase. Cytochrome c oxidase is the component of the respiratory chain that catalyzes the reduction of oxygen to water. Electrons originating from reduced cytochrome c in the intermembrane space (IMS) are transferred via the dinuclear copper A center (CU(A)) of subunit 2 and heme A of subunit 1 to the active site in subunit 1, a binuclear center (BNC) formed by heme A3 and copper B (CU(B)). The BNC reduces molecular oxygen to 2 water molecules using 4 electrons from cytochrome c in the IMS and 4 protons from the mitochondrial matrix. In Yarrowia lipolytica (strain CLIB 122 / E 150) (Yeast), this protein is Cytochrome c oxidase subunit 3 (COX3).